The following is an 860-amino-acid chain: Leucine--tRNA ligase (860 aa).

The 'HIGH' region motif lies at 42 to 52 (PYPSGRLHMGH). Residues 619–623 (KMSKS) carry the 'KMSKS' region motif. Residue K622 coordinates ATP.

It belongs to the class-I aminoacyl-tRNA synthetase family.

It is found in the cytoplasm. The catalysed reaction is tRNA(Leu) + L-leucine + ATP = L-leucyl-tRNA(Leu) + AMP + diphosphate. The sequence is that of Leucine--tRNA ligase from Mannheimia succiniciproducens (strain KCTC 0769BP / MBEL55E).